The sequence spans 467 residues: Asparagine--tRNA ligase (467 aa).

The protein belongs to the class-II aminoacyl-tRNA synthetase family. In terms of assembly, homodimer.

It is found in the cytoplasm. It catalyses the reaction tRNA(Asn) + L-asparagine + ATP = L-asparaginyl-tRNA(Asn) + AMP + diphosphate + H(+). The chain is Asparagine--tRNA ligase from Mannheimia succiniciproducens (strain KCTC 0769BP / MBEL55E).